Reading from the N-terminus, the 305-residue chain is Transmembrane epididymal protein 1A (305 aa).

A helical transmembrane segment spans residues 4 to 24 (FIGHISPGLFLVFYGLYQAVI). N-linked (GlcNAc...) asparagine glycosylation occurs at N32. Transmembrane regions (helical) follow at residues 54 to 74 (IAHAGWLKVVIGSLLIVYEIS), 124 to 144 (CVLLERGATVLGVYVLLLLLV), 159 to 179 (SLLILVVFLLMLVLTAELWAP), 187 to 207 (IETFLILIMGSWLIQAAFILF), and 223 to 243 (IMFVTTFFCWHVMINALCMLG). The segment at 285 to 305 (EQQDKDDQAPLLSKISPCDRA) is disordered.

The protein belongs to the TMEM45 family.

The protein localises to the membrane. The sequence is that of Transmembrane epididymal protein 1A from Mus musculus (Mouse).